Consider the following 141-residue polypeptide: Vesicle-associated membrane protein 4 (141 aa).

The tract at residues 1 to 51 (MPPKFKRHLNDDDVTGSVKSERRNLLEDDSDEEEDFFLRGPSGPRFGPRND) is disordered. Residues 1-115 (MPPKFKRHLN…RRQMWWRGCK (115 aa)) are Cytoplasmic-facing. Phosphoserine occurs at positions 17 and 30. Positions 52–112 (KIKHVQNQVD…KQLRRQMWWR (61 aa)) constitute a v-SNARE coiled-coil homology domain. A helical; Anchor for type IV membrane protein membrane pass occupies residues 116 to 136 (IKAIMALVAAILLLVIIILIV). Residues 137–141 (MKYRT) are Vesicular-facing.

This sequence belongs to the synaptobrevin family. In terms of assembly, identified in a complex containing STX6, STX12, VAMP4 and VTI1A. Interacts with BAIAP3; this interaction is increased in the presence of calcium.

Its subcellular location is the golgi apparatus. It is found in the trans-Golgi network membrane. Involved in the pathway that functions to remove an inhibitor (probably synaptotagmin-4) of calcium-triggered exocytosis during the maturation of secretory granules. May be a marker for this sorting pathway that is critical for remodeling the secretory response of granule. This is Vesicle-associated membrane protein 4 (VAMP4) from Homo sapiens (Human).